The following is a 307-amino-acid chain: NAD kinase 2 (307 aa).

D77 functions as the Proton acceptor in the catalytic mechanism. Residues 77–78 (DG), 151–152 (NE), D181, 192–197 (TAYALS), and N251 contribute to the NAD(+) site.

The protein belongs to the NAD kinase family. The cofactor is a divalent metal cation.

It localises to the cytoplasm. It carries out the reaction NAD(+) + ATP = ADP + NADP(+) + H(+). Involved in the regulation of the intracellular balance of NAD and NADP, and is a key enzyme in the biosynthesis of NADP. Catalyzes specifically the phosphorylation on 2'-hydroxyl of the adenosine moiety of NAD to yield NADP. This is NAD kinase 2 from Thermosynechococcus vestitus (strain NIES-2133 / IAM M-273 / BP-1).